The chain runs to 289 residues: Sphingomyelinase D (289 aa).

The N-terminal stretch at 1-22 is a signal peptide; sequence MQSISVLICVLLALSILNFTVA. Residue H34 is part of the active site. Mg(2+) is bound by residues E54, D56, and D103. Positions 282–289 match the SMD-tail motif; sequence ATEDDAPW.

It belongs to the sphingomyelinase D/phospholipase D family. It depends on Mg(2+) as a cofactor.

It localises to the secreted. It catalyses the reaction a sphingomyelin + H2O = an N-acylsphing-4-enine 1-phosphate + choline + H(+). Its activity is regulated as follows. Sphingomyelinase activity is reduced by 33 percent following addition of EDTA. Catalyzes the hydrolysis of sphingomyelin. Sphingomyelinases D are produced by some spider in their venoms, but also by arthropods such as ticks, or pathogenic bacteria and fungi. They might play a role in pathogenicity through different mechanisms, such as membrane destabilization and host cell penetration, but also pulmonary inflammation and cutaneous lesions. In Aspergillus flavus (strain ATCC 200026 / FGSC A1120 / IAM 13836 / NRRL 3357 / JCM 12722 / SRRC 167), this protein is Sphingomyelinase D.